The primary structure comprises 69 residues: Putative membrane protein insertion efficiency factor (69 aa).

This sequence belongs to the UPF0161 family.

Its subcellular location is the cell membrane. In terms of biological role, could be involved in insertion of integral membrane proteins into the membrane. This Clostridium botulinum (strain Okra / Type B1) protein is Putative membrane protein insertion efficiency factor.